The chain runs to 333 residues: Biotin synthase (333 aa).

The region spanning 51 to 278 is the Radical SAM core domain; that stretch reads RAIQLSTLMS…KSYVRLSAGR (228 aa). [4Fe-4S] cluster contacts are provided by cysteine 66, cysteine 70, and cysteine 73. [2Fe-2S] cluster is bound by residues cysteine 110, cysteine 141, cysteine 201, and arginine 273.

This sequence belongs to the radical SAM superfamily. Biotin synthase family. As to quaternary structure, homodimer. [4Fe-4S] cluster is required as a cofactor. The cofactor is [2Fe-2S] cluster.

The catalysed reaction is (4R,5S)-dethiobiotin + (sulfur carrier)-SH + 2 reduced [2Fe-2S]-[ferredoxin] + 2 S-adenosyl-L-methionine = (sulfur carrier)-H + biotin + 2 5'-deoxyadenosine + 2 L-methionine + 2 oxidized [2Fe-2S]-[ferredoxin]. The protein operates within cofactor biosynthesis; biotin biosynthesis; biotin from 7,8-diaminononanoate: step 2/2. Catalyzes the conversion of dethiobiotin (DTB) to biotin by the insertion of a sulfur atom into dethiobiotin via a radical-based mechanism. The chain is Biotin synthase from Haemophilus influenzae (strain 86-028NP).